Here is a 219-residue protein sequence, read N- to C-terminus: 7-cyano-7-deazaguanine synthase (219 aa).

An ATP-binding site is contributed by 10-20 (FSGGQDSTTCL). Cys188, Cys196, Cys199, and Cys202 together coordinate Zn(2+).

It belongs to the QueC family. Zn(2+) serves as cofactor.

The enzyme catalyses 7-carboxy-7-deazaguanine + NH4(+) + ATP = 7-cyano-7-deazaguanine + ADP + phosphate + H2O + H(+). It participates in purine metabolism; 7-cyano-7-deazaguanine biosynthesis. Its function is as follows. Catalyzes the ATP-dependent conversion of 7-carboxy-7-deazaguanine (CDG) to 7-cyano-7-deazaguanine (preQ(0)). In Neisseria meningitidis serogroup A / serotype 4A (strain DSM 15465 / Z2491), this protein is 7-cyano-7-deazaguanine synthase.